An 863-amino-acid chain; its full sequence is Leucine--tRNA ligase (863 aa).

A 'HIGH' region motif is present at residues P40–H51. Positions K635–S639 match the 'KMSKS' region motif. K638 lines the ATP pocket.

Belongs to the class-I aminoacyl-tRNA synthetase family.

Its subcellular location is the cytoplasm. It carries out the reaction tRNA(Leu) + L-leucine + ATP = L-leucyl-tRNA(Leu) + AMP + diphosphate. In Leptospira interrogans serogroup Icterohaemorrhagiae serovar Lai (strain 56601), this protein is Leucine--tRNA ligase.